The sequence spans 283 residues: Thymidylate synthase (283 aa).

R22 lines the dUMP pocket. C160 functions as the Nucleophile in the catalytic mechanism. DUMP is bound by residues 180–183 (RSCD), N191, and 221–223 (HIY). D183 contacts (6R)-5,10-methylene-5,6,7,8-tetrahydrofolate. S282 is a binding site for (6R)-5,10-methylene-5,6,7,8-tetrahydrofolate.

The protein belongs to the thymidylate synthase family. Bacterial-type ThyA subfamily. As to quaternary structure, homodimer.

It is found in the cytoplasm. The enzyme catalyses dUMP + (6R)-5,10-methylene-5,6,7,8-tetrahydrofolate = 7,8-dihydrofolate + dTMP. It participates in pyrimidine metabolism; dTTP biosynthesis. In terms of biological role, catalyzes the reductive methylation of 2'-deoxyuridine-5'-monophosphate (dUMP) to 2'-deoxythymidine-5'-monophosphate (dTMP) while utilizing 5,10-methylenetetrahydrofolate (mTHF) as the methyl donor and reductant in the reaction, yielding dihydrofolate (DHF) as a by-product. This enzymatic reaction provides an intracellular de novo source of dTMP, an essential precursor for DNA biosynthesis. The chain is Thymidylate synthase from Tolumonas auensis (strain DSM 9187 / NBRC 110442 / TA 4).